Reading from the N-terminus, the 339-residue chain is MEERLVSGYELTEDENEFSLRPRRLSEYIGQQKVKETISIFIEAAKKRNEALDHVLLFGPPGLGKTTLATIIANELGVDIKITSGPALERPGDLAAILTNLGEKDVLFIDEIHRLPRIVEEVLYSAMEDFALDIMLGKGPGARSLRLSLPKFTLIGATTRAGLLTSPLRDRFGMVHRLEFYSVEELMLIINRSAALLKTEITPEGSFEIAKRSRGTPRIANRLLKRVRDYAEVRSSGVINLENAKAALDLLEIDELGLDPTDRLILKTMIEKYQGGPVGIEAIAAAISEEVDTIEDVYEPFLLQIGFIKRTPRGRVVTKLAYDHLGIAYNKNAGELSLW.

The interval 1 to 181 (MEERLVSGYE…FGMVHRLEFY (181 aa)) is large ATPase domain (RuvB-L). ATP contacts are provided by residues Leu-20, Arg-21, Gly-62, Lys-65, Thr-66, Thr-67, 128–130 (EDF), Arg-171, Tyr-181, and Arg-218. Thr-66 lines the Mg(2+) pocket. Residues 182–252 (SVEELMLIIN…NAKAALDLLE (71 aa)) are small ATPAse domain (RuvB-S). Residues 255 to 339 (ELGLDPTDRL…NKNAGELSLW (85 aa)) form a head domain (RuvB-H) region. Arg-310 and Arg-315 together coordinate DNA.

It belongs to the RuvB family. In terms of assembly, homohexamer. Forms an RuvA(8)-RuvB(12)-Holliday junction (HJ) complex. HJ DNA is sandwiched between 2 RuvA tetramers; dsDNA enters through RuvA and exits via RuvB. An RuvB hexamer assembles on each DNA strand where it exits the tetramer. Each RuvB hexamer is contacted by two RuvA subunits (via domain III) on 2 adjacent RuvB subunits; this complex drives branch migration. In the full resolvosome a probable DNA-RuvA(4)-RuvB(12)-RuvC(2) complex forms which resolves the HJ.

It is found in the cytoplasm. The catalysed reaction is ATP + H2O = ADP + phosphate + H(+). In terms of biological role, the RuvA-RuvB-RuvC complex processes Holliday junction (HJ) DNA during genetic recombination and DNA repair, while the RuvA-RuvB complex plays an important role in the rescue of blocked DNA replication forks via replication fork reversal (RFR). RuvA specifically binds to HJ cruciform DNA, conferring on it an open structure. The RuvB hexamer acts as an ATP-dependent pump, pulling dsDNA into and through the RuvAB complex. RuvB forms 2 homohexamers on either side of HJ DNA bound by 1 or 2 RuvA tetramers; 4 subunits per hexamer contact DNA at a time. Coordinated motions by a converter formed by DNA-disengaged RuvB subunits stimulates ATP hydrolysis and nucleotide exchange. Immobilization of the converter enables RuvB to convert the ATP-contained energy into a lever motion, pulling 2 nucleotides of DNA out of the RuvA tetramer per ATP hydrolyzed, thus driving DNA branch migration. The RuvB motors rotate together with the DNA substrate, which together with the progressing nucleotide cycle form the mechanistic basis for DNA recombination by continuous HJ branch migration. Branch migration allows RuvC to scan DNA until it finds its consensus sequence, where it cleaves and resolves cruciform DNA. The chain is Holliday junction branch migration complex subunit RuvB from Carboxydothermus hydrogenoformans (strain ATCC BAA-161 / DSM 6008 / Z-2901).